The chain runs to 683 residues: Glucosylceramidase (683 aa).

The active-site Proton donor is the Glu254. Glu483 acts as the Nucleophile in catalysis.

The protein belongs to the glycosyl hydrolase 5 (cellulase A) family.

The protein localises to the membrane. The enzyme catalyses a beta-D-glucosyl-(1&lt;-&gt;1')-N-acylsphing-4-enine + H2O = an N-acylsphing-4-enine + D-glucose. Inhibited by metal cations Co(2+), Cu(2+), Ni(2+), Pb(2+) and Zn(2+). Not inhibited by metal chelator ethylenediaminetetraacetic acid (EDTA). Its function is as follows. Specifically hydrolyzes the glucosidic linkage in glucosylceramide. May prevent accumulation of aberrent glucosylceramide containing immature ceramide. This Rhizopus delemar (strain RA 99-880 / ATCC MYA-4621 / FGSC 9543 / NRRL 43880) (Mucormycosis agent) protein is Glucosylceramidase.